We begin with the raw amino-acid sequence, 253 residues long: tRNA uridine(34) hydroxylase (253 aa).

One can recognise a Rhodanese domain in the interval 127 to 221 (RGRPLVLLDT…YFEEVGGEGY (95 aa)). Cys-181 acts as the Cysteine persulfide intermediate in catalysis.

Belongs to the TrhO family.

It carries out the reaction uridine(34) in tRNA + AH2 + O2 = 5-hydroxyuridine(34) in tRNA + A + H2O. Functionally, catalyzes oxygen-dependent 5-hydroxyuridine (ho5U) modification at position 34 in tRNAs. This is tRNA uridine(34) hydroxylase from Xanthomonas oryzae pv. oryzae (strain MAFF 311018).